Here is a 345-residue protein sequence, read N- to C-terminus: Ferrochelatase (345 aa).

Positions 199 and 302 each coordinate Fe cation.

This sequence belongs to the ferrochelatase family.

It is found in the cytoplasm. The catalysed reaction is heme b + 2 H(+) = protoporphyrin IX + Fe(2+). It participates in porphyrin-containing compound metabolism; protoheme biosynthesis; protoheme from protoporphyrin-IX: step 1/1. Catalyzes the ferrous insertion into protoporphyrin IX. The polypeptide is Ferrochelatase (Porphyromonas gingivalis (strain ATCC 33277 / DSM 20709 / CIP 103683 / JCM 12257 / NCTC 11834 / 2561)).